An 85-amino-acid polypeptide reads, in one-letter code: Colicin-E8 immunity protein in ColE6 (85 aa).

Belongs to the colicins ColE2/ColE8/ColE9 and pyocins S1/S2 family.

The sequence is that of Colicin-E8 immunity protein in ColE6 (imm) from Escherichia coli.